The primary structure comprises 238 residues: Large ribosomal subunit protein uL2 (238 aa).

A disordered region spans residues 201–238; that stretch reads FGGGGHQHPGRPKTIARGTSPGRTVGHVAARQTGRSRK.

Belongs to the universal ribosomal protein uL2 family. Part of the 50S ribosomal subunit. Forms a bridge to the 30S subunit in the 70S ribosome.

One of the primary rRNA binding proteins. Required for association of the 30S and 50S subunits to form the 70S ribosome, for tRNA binding and peptide bond formation. It has been suggested to have peptidyltransferase activity; this is somewhat controversial. Makes several contacts with the 16S rRNA in the 70S ribosome. The polypeptide is Large ribosomal subunit protein uL2 (Methanoregula boonei (strain DSM 21154 / JCM 14090 / 6A8)).